A 428-amino-acid polypeptide reads, in one-letter code: Glutamate-1-semialdehyde 2,1-aminomutase (428 aa).

K267 carries the N6-(pyridoxal phosphate)lysine modification.

The protein belongs to the class-III pyridoxal-phosphate-dependent aminotransferase family. HemL subfamily. As to quaternary structure, homodimer. It depends on pyridoxal 5'-phosphate as a cofactor.

It is found in the cytoplasm. It catalyses the reaction (S)-4-amino-5-oxopentanoate = 5-aminolevulinate. It participates in porphyrin-containing compound metabolism; protoporphyrin-IX biosynthesis; 5-aminolevulinate from L-glutamyl-tRNA(Glu): step 2/2. The chain is Glutamate-1-semialdehyde 2,1-aminomutase from Desulforapulum autotrophicum (strain ATCC 43914 / DSM 3382 / VKM B-1955 / HRM2) (Desulfobacterium autotrophicum).